The sequence spans 52 residues: ATP synthase F(1) complex subunit epsilon, mitochondrial (52 aa).

3 positions are modified to N6-acetyllysine; alternate: Lys-21, Lys-32, and Lys-37. An N6-succinyllysine; alternate mark is found at Lys-21, Lys-32, and Lys-37. Lys-44 carries the post-translational modification N6-acetyllysine.

It belongs to the eukaryotic ATPase epsilon family. As to quaternary structure, component of the ATP synthase complex composed at least of ATP5F1A/subunit alpha, ATP5F1B/subunit beta, ATP5MC1/subunit c (homooctomer), MT-ATP6/subunit a, MT-ATP8/subunit 8, ATP5ME/subunit e, ATP5MF/subunit f, ATP5MG/subunit g, ATP5MK/subunit k, ATP5MJ/subunit j, ATP5F1C/subunit gamma, ATP5F1D/subunit delta, ATP5F1E/subunit epsilon, ATP5PF/subunit F6, ATP5PB/subunit b, ATP5PD/subunit d, ATP5PO/subunit OSCP. ATP synthase complex consists of a soluble F(1) head domain (subunits alpha(3) and beta(3)) - the catalytic core - and a membrane F(0) domain - the membrane proton channel (subunits c, a, 8, e, f, g, k and j). These two domains are linked by a central stalk (subunits gamma, delta, and epsilon) rotating inside the F1 region and a stationary peripheral stalk (subunits F6, b, d, and OSCP).

It is found in the mitochondrion. Its subcellular location is the mitochondrion inner membrane. Its function is as follows. Subunit epsilon, of the mitochondrial membrane ATP synthase complex (F(1)F(0) ATP synthase or Complex V) that produces ATP from ADP in the presence of a proton gradient across the membrane which is generated by electron transport complexes of the respiratory chain. ATP synthase complex consist of a soluble F(1) head domain - the catalytic core - and a membrane F(1) domain - the membrane proton channel. These two domains are linked by a central stalk rotating inside the F(1) region and a stationary peripheral stalk. During catalysis, ATP synthesis in the catalytic domain of F(1) is coupled via a rotary mechanism of the central stalk subunits to proton translocation. In vivo, can only synthesize ATP although its ATP hydrolase activity can be activated artificially in vitro. May be essential for the assembly of F(1) and may play an important role in the incorporation of the hydrophobic subunit c into the F(1)-c oligomer rotor of the mitochondrial ATP synthase complex. This chain is ATP synthase F(1) complex subunit epsilon, mitochondrial, found in Mus musculus (Mouse).